The chain runs to 705 residues: Complement C1r subcomponent (705 aa).

The N-terminal stretch at 1–17 (MWLLYLLVPALFCRAGG) is a signal peptide. Positions 18 to 141 (SIPIPQKLFG…KGFLAYYQAV (124 aa)) constitute a CUB 1 domain. Glu-66, Asp-74, and Asp-119 together coordinate Ca(2+). Cys-71 and Cys-89 are joined by a disulfide. An N-linked (GlcNAc...) asparagine glycan is attached at Asn-125. Ca(2+) is bound by residues Asp-142, Leu-143, and Glu-145. Positions 142–190 (DLDECASRSKSGEEDPQPQCQHLCHNYVGGYFCSCRPGYELQEDTHSCQ) constitute an EGF-like; calcium-binding domain. Cystine bridges form between Cys-146-Cys-165, Cys-161-Cys-174, Cys-176-Cys-189, and Cys-193-Cys-220. Residues Asn-167, Tyr-168, and Gly-171 each contribute to the Ca(2+) site. Asn-167 carries the post-translational modification (3R)-3-hydroxyasparagine. Positions 193–305 (CSSELYTEAS…RGWKLRYTTE (113 aa)) constitute a CUB 2 domain. A Phosphoserine; by CK2 modification is found at Ser-206. Asn-221 carries N-linked (GlcNAc...) asparagine glycosylation. Residues Asp-243, Asp-253, Asp-290, and Asp-294 each contribute to the Ca(2+) site. The cysteines at positions 250 and 268 are disulfide-linked. Sushi domains follow at residues 307–373 (IKCP…RCKI) and 374–449 (KDCG…RCLP). 5 cysteine pairs are disulfide-bonded: Cys-309–Cys-358, Cys-338–Cys-371, Cys-376–Cys-429, Cys-406–Cys-447, and Cys-451–Cys-577. Residues 464–702 (IIGGQKAKMG…YVDWIKKEME (239 aa)) form the Peptidase S1 domain. The active-site Charge relay system is the His-502. Asn-514 carries N-linked (GlcNAc...) asparagine glycosylation. Catalysis depends on Asp-557, which acts as the Charge relay system. An N-linked (GlcNAc...) asparagine glycan is attached at Asn-581. Disulfide bonds link Cys-620–Cys-639 and Cys-650–Cys-680. The active-site Charge relay system is Ser-654.

The protein belongs to the peptidase S1 family. In terms of assembly, core component of the complement C1 complex, a calcium-dependent complex composed of 1 molecule of the C1Q subcomplex, 2 molecules of C1R and 2 molecules of C1S. The C1Q subcomplex is composed 18 subunits: 3 chains of C1QA, C1QB, and C1QC trimerize to form 6 collagen-like triple helices connected to six globular ligand-recognition modules. Within the C1 complex, C1R is a dimer of identical chains, each of which is activated by cleavage into two chains, heavy and light, connected by disulfide bonds. Cleaved and activated by autocatalytic processing to generate Complement C1r subcomponent heavy and light chains that are connected by disulfide bonds. Post-translationally, the iron and 2-oxoglutarate dependent 3-hydroxylation of aspartate and asparagine is (R) stereospecific within EGF domains.

The protein resides in the secreted. Its subcellular location is the cell surface. It catalyses the reaction Selective cleavage of Lys(or Arg)-|-Ile bond in complement subcomponent C1s to form the active form of C1s (EC 3.4.21.42).. Activated by the C1Q subcomplex of the C1 complex following C1Q binding to immunoglobulins (IgG or IgM) complexed with antigens to form antigen-antibody complexes on the surface of pathogens. Immunoglobulin-binding promotes autoactivation of C1R, which results in the cleavage of the Arg-Ile bond in the catalytic domain. Functionally, serine protease component of the complement C1 complex, a multiprotein complex that initiates the classical pathway of the complement system, a cascade of proteins that leads to phagocytosis and breakdown of pathogens and signaling that strengthens the adaptive immune system. C1R catalyzes the first enzymatic step in the classical complement pathway: it is activated by the C1Q subcomplex of the C1 complex, which associates with IgG or IgM immunoglobulins complexed with antigens to form antigen-antibody complexes on the surface of pathogens. Immunoglobulin-binding promotes the autocatalytic cleavage and activation of C1R. Activated C1R then cleaves and activates C1S, the second protease of the classical complement pathway. It is unclear if C1R activates C1S within single, strained C1 complexes or between neighboring C1 complexes on surfaces. The chain is Complement C1r subcomponent from Homo sapiens (Human).